The following is a 285-amino-acid chain: Ribonuclease H1 (285 aa).

The tract at residues 72–122 (RSSSSPDGSKGQESAHVQKLQVKTSKRPREPLGEEEEPPEPGAKHTRQDTE) is disordered. One can recognise an RNase H type-1 domain in the interval 135 to 281 (MGESVVVYTD…ADRLAREGAK (147 aa)). Mg(2+)-binding residues include Asp-144, Glu-185, Asp-209, and Asp-273.

The protein belongs to the RNase H family. In terms of assembly, monomer. Mg(2+) serves as cofactor.

Its subcellular location is the cytoplasm. It catalyses the reaction Endonucleolytic cleavage to 5'-phosphomonoester.. With respect to regulation, in the presence of magnesium, manganese is inhibitory. Endonuclease that specifically degrades the RNA of RNA-DNA hybrids. Plays a role in RNA polymerase II (RNAp II) transcription termination by degrading R-loop RNA-DNA hybrid formation at G-rich pause sites located downstream of the poly(A) site and behind the elongating RNAp II. This chain is Ribonuclease H1 (Rnaseh1), found in Rattus norvegicus (Rat).